The following is a 256-amino-acid chain: Short chain dehydrogenase adrF (256 aa).

NADP(+) is bound by residues Ile11, Asp57, Arg119, Tyr151, Lys155, and Val184. The active-site Proton acceptor is Tyr151. Lys155 (lowers pKa of active site Tyr) is an active-site residue.

Belongs to the short-chain dehydrogenases/reductases (SDR) family.

It participates in secondary metabolite biosynthesis; terpenoid biosynthesis. Functionally, short chain dehydrogenase; part of the gene cluster that mediates the biosynthesis of andrastins, meroterpenoid compounds that exhibit inhibitory activity against ras farnesyltransferase, suggesting that they could be promising leads for antitumor agents. The first step of the pathway is the synthesis of 3,5-dimethylorsellinic acid (DMOA) by the polyketide synthase adrD via condensation of one acetyl-CoA starter unit with 3 malonyl-CoA units and 2 methylations. DMAO is then converted to farnesyl-DMAO by the prenyltransferase adrG. The methyltransferase adrK catalyzes the methylation of the carboxyl group of farnesyl-DMAO to farnesyl-DMAO methyl ester which is further converted to epoxyfarnesyl-DMAO methyl ester by the FAD-dependent monooxygenase adrH. The terpene cyclase adrI then catalyzes the carbon skeletal rearrangement to generate the andrastin E, the first compound in the pathway having the andrastin scaffold, with the tetracyclic ring system. The post-cyclization tailoring enzymes adrF, adrE, adrJ, and adrA, are involved in the conversion of andrastin E into andrastin A. The short chain dehydrogenase adrF is responsible for the oxidation of the C-3 a hydroxyl group of andrastin E to yield the corresponding ketone, andrastin D. The ketoreductase adrE stereoselectively reduces the carbonyl moiety to reverse the stereochemistry of the C-3 position to yield andrastin F. The acetyltransferase adrJ is the acetyltransferase that attaches the acetyl group to the C-3 hydroxyl group of andrastin F to yield andrastin C. Finally, the cytochrome P450 monooxygenase adrA catalyzes two sequential oxidation reactions of the C-23 methyl group, to generate the corresponding alcohol andrastin B, and aldehyde andrastin A. In Penicillium roqueforti, this protein is Short chain dehydrogenase adrF.